We begin with the raw amino-acid sequence, 80 residues long: WAP four-disulfide core domain protein 15B (80 aa).

Positions 1–20 are cleaved as a signal peptide; that stretch reads MKLLGLSLLAVTILLCCNMA. The WAP domain occupies 29–76; it reads VFSKPGYCPEYRVPCPFVLIPKCRRDKGCKDALKCCFFYCQMRCVDPW. 4 disulfides stabilise this stretch: C36–C64, C43–C68, C51–C63, and C57–C72.

As to expression, constitutively expressed in kidney and epididymis.

The protein localises to the secreted. Its function is as follows. Antibacterial protein which inhibits the growth of E.coli and S.aureus. This Mus musculus (Mouse) protein is WAP four-disulfide core domain protein 15B (Wfdc15b).